The sequence spans 435 residues: Serine--tRNA ligase (435 aa).

242–244 (TAE) serves as a coordination point for L-serine. Position 273 to 275 (273 to 275 (RSE)) interacts with ATP. Glutamate 296 provides a ligand contact to L-serine. 360 to 363 (EISS) contributes to the ATP binding site. L-serine is bound at residue serine 396.

The protein belongs to the class-II aminoacyl-tRNA synthetase family. Type-1 seryl-tRNA synthetase subfamily. As to quaternary structure, homodimer. The tRNA molecule binds across the dimer.

Its subcellular location is the cytoplasm. The catalysed reaction is tRNA(Ser) + L-serine + ATP = L-seryl-tRNA(Ser) + AMP + diphosphate + H(+). The enzyme catalyses tRNA(Sec) + L-serine + ATP = L-seryl-tRNA(Sec) + AMP + diphosphate + H(+). Its pathway is aminoacyl-tRNA biosynthesis; selenocysteinyl-tRNA(Sec) biosynthesis; L-seryl-tRNA(Sec) from L-serine and tRNA(Sec): step 1/1. Catalyzes the attachment of serine to tRNA(Ser). Is also able to aminoacylate tRNA(Sec) with serine, to form the misacylated tRNA L-seryl-tRNA(Sec), which will be further converted into selenocysteinyl-tRNA(Sec). The chain is Serine--tRNA ligase from Vibrio parahaemolyticus serotype O3:K6 (strain RIMD 2210633).